The sequence spans 177 residues: Large ribosomal subunit protein uL6 (177 aa).

The segment covering 152-171 has biased composition (basic and acidic residues); it reads RPPEPYKGKGVRYDDEEVRR. The segment at 152–177 is disordered; the sequence is RPPEPYKGKGVRYDDEEVRRKEAKKK.

It belongs to the universal ribosomal protein uL6 family. As to quaternary structure, part of the 50S ribosomal subunit.

Its function is as follows. This protein binds to the 23S rRNA, and is important in its secondary structure. It is located near the subunit interface in the base of the L7/L12 stalk, and near the tRNA binding site of the peptidyltransferase center. The protein is Large ribosomal subunit protein uL6 of Shewanella putrefaciens (strain CN-32 / ATCC BAA-453).